A 350-amino-acid polypeptide reads, in one-letter code: Methionine import ATP-binding protein MetN 1 (350 aa).

Residues 12 to 251 enclose the ABC transporter domain; the sequence is IDLKNITVLF…PSREVTQDFV (240 aa). 48 to 55 serves as a coordination point for ATP; it reads GYSGAGKS.

This sequence belongs to the ABC transporter superfamily. Methionine importer (TC 3.A.1.24) family. In terms of assembly, the complex is composed of two ATP-binding proteins (MetN), two transmembrane proteins (MetI) and a solute-binding protein (MetQ).

It is found in the cell membrane. The enzyme catalyses L-methionine(out) + ATP + H2O = L-methionine(in) + ADP + phosphate + H(+). The catalysed reaction is D-methionine(out) + ATP + H2O = D-methionine(in) + ADP + phosphate + H(+). Functionally, part of the ABC transporter complex MetNIQ involved in methionine import. Responsible for energy coupling to the transport system. The sequence is that of Methionine import ATP-binding protein MetN 1 from Oenococcus oeni (strain ATCC BAA-331 / PSU-1).